The chain runs to 700 residues: ATP-dependent zinc metalloprotease FtsH (700 aa).

The Cytoplasmic segment spans residues 1–10 (MNNNKGGFLR). Residues 11-31 (SSVFYIFIFLAVVGMVYGLFG) traverse the membrane as a helical segment. Residues 32–130 (NDKTTTKTIT…LVTKQAENSG (99 aa)) lie on the Extracellular side of the membrane. The helical transmembrane segment at 131–151 (FWLNLLVSLVPVLLIVAVFYL) threads the bilayer. The Cytoplasmic portion of the chain corresponds to 152–700 (MMNQAGGGKG…ETDDNNTENK (549 aa)). 227-234 (GPPGTGKT) contributes to the ATP binding site. Residue His-449 coordinates Zn(2+). Glu-450 is a catalytic residue. Zn(2+) contacts are provided by His-453 and Asp-525. A disordered region spans residues 644–700 (KSFEEAKAAADAKDSQAEQRFEKQDEEKSSDDHSESKNEDTDSTDKSETDDNNTENK).

The protein in the central section; belongs to the AAA ATPase family. It in the C-terminal section; belongs to the peptidase M41 family. In terms of assembly, homohexamer. Zn(2+) serves as cofactor.

The protein resides in the cell membrane. Its function is as follows. Acts as a processive, ATP-dependent zinc metallopeptidase for both cytoplasmic and membrane proteins. Plays a role in the quality control of integral membrane proteins. The polypeptide is ATP-dependent zinc metalloprotease FtsH (Leuconostoc mesenteroides subsp. mesenteroides (strain ATCC 8293 / DSM 20343 / BCRC 11652 / CCM 1803 / JCM 6124 / NCDO 523 / NBRC 100496 / NCIMB 8023 / NCTC 12954 / NRRL B-1118 / 37Y)).